The sequence spans 152 residues: UPF0756 membrane protein Helmi_09930 (152 aa).

The next 5 membrane-spanning stretches (helical) occupy residues Val6–Ala26, Thr52–Leu72, Val75–Thr95, Ile111–Val131, and Gly132–Lys152.

Belongs to the UPF0756 family.

Its subcellular location is the cell membrane. In Heliobacterium modesticaldum (strain ATCC 51547 / Ice1), this protein is UPF0756 membrane protein Helmi_09930.